A 106-amino-acid polypeptide reads, in one-letter code: Large ribosomal subunit protein bL21 (106 aa).

It belongs to the bacterial ribosomal protein bL21 family. As to quaternary structure, part of the 50S ribosomal subunit. Contacts protein L20.

Functionally, this protein binds to 23S rRNA in the presence of protein L20. The sequence is that of Large ribosomal subunit protein bL21 from Dichelobacter nodosus (strain VCS1703A).